The chain runs to 567 residues: Urease subunit alpha (567 aa).

The region spanning 129–567 is the Urease domain; that stretch reads GGVDTHIHWI…LPMAQRYFLF (439 aa). Residues His134, His136, and Lys217 each contribute to the Ni(2+) site. Lys217 is modified (N6-carboxylysine). His219 serves as a coordination point for substrate. Ni(2+) contacts are provided by His246 and His272. Catalysis depends on His320, which acts as the Proton donor. Asp360 contacts Ni(2+).

The protein belongs to the metallo-dependent hydrolases superfamily. Urease alpha subunit family. As to quaternary structure, heterotrimer of UreA (gamma), UreB (beta) and UreC (alpha) subunits. Three heterotrimers associate to form the active enzyme. Requires Ni cation as cofactor. Post-translationally, carboxylation allows a single lysine to coordinate two nickel ions.

Its subcellular location is the cytoplasm. It catalyses the reaction urea + 2 H2O + H(+) = hydrogencarbonate + 2 NH4(+). The protein operates within nitrogen metabolism; urea degradation; CO(2) and NH(3) from urea (urease route): step 1/1. This is Urease subunit alpha from Citrobacter koseri (strain ATCC BAA-895 / CDC 4225-83 / SGSC4696).